The primary structure comprises 387 residues: Succinyl-diaminopimelate desuccinylase (387 aa).

His73 contributes to the Zn(2+) binding site. Residue Asp75 is part of the active site. Zn(2+) is bound at residue Asp106. Residue Glu141 is the Proton acceptor of the active site. Glu142, Glu170, and His359 together coordinate Zn(2+).

Belongs to the peptidase M20A family. DapE subfamily. Homodimer. Requires Zn(2+) as cofactor. Co(2+) is required as a cofactor.

The enzyme catalyses N-succinyl-(2S,6S)-2,6-diaminopimelate + H2O = (2S,6S)-2,6-diaminopimelate + succinate. Its pathway is amino-acid biosynthesis; L-lysine biosynthesis via DAP pathway; LL-2,6-diaminopimelate from (S)-tetrahydrodipicolinate (succinylase route): step 3/3. In terms of biological role, catalyzes the hydrolysis of N-succinyl-L,L-diaminopimelic acid (SDAP), forming succinate and LL-2,6-diaminopimelate (DAP), an intermediate involved in the bacterial biosynthesis of lysine and meso-diaminopimelic acid, an essential component of bacterial cell walls. In Methylorubrum populi (strain ATCC BAA-705 / NCIMB 13946 / BJ001) (Methylobacterium populi), this protein is Succinyl-diaminopimelate desuccinylase.